Consider the following 244-residue polypeptide: Transcriptional activator protein CarR (244 aa).

The region spanning 162–227 (DNSRNALLSP…HAITKALELN (66 aa)) is the HTH luxR-type domain. Positions 186–205 (YKEVSRILGISEVTVKFHIN) form a DNA-binding region, H-T-H motif.

Belongs to the autoinducer-regulated transcriptional regulatory protein family.

Functions as an OHLL responsive transcriptional regulator which acts in the control of the biosynthesis of carbapenem antibiotics. This is Transcriptional activator protein CarR (carR) from Pectobacterium carotovorum subsp. carotovorum (Erwinia carotovora subsp. carotovora).